We begin with the raw amino-acid sequence, 38 residues long: Bacteriocin curvaticin FS47 (38 aa).

Its subcellular location is the secreted. In terms of biological role, bacteriocin active against Listeria monocytogenes, Pediococcus, Enterococcus, Lactobacilli and Bacilli. This Latilactobacillus curvatus (Lactobacillus curvatus) protein is Bacteriocin curvaticin FS47.